The following is a 269-amino-acid chain: Glutamate racemase (269 aa).

Substrate is bound by residues 14-15 (DS) and 46-47 (YS). The Proton donor/acceptor role is filled by Cys78. Residue 79 to 80 (NT) coordinates substrate. The Proton donor/acceptor role is filled by Cys189. Residue 190–191 (TH) coordinates substrate.

Belongs to the aspartate/glutamate racemases family.

It carries out the reaction L-glutamate = D-glutamate. It participates in cell wall biogenesis; peptidoglycan biosynthesis. Provides the (R)-glutamate required for cell wall biosynthesis. The sequence is that of Glutamate racemase from Haemophilus influenzae (strain ATCC 51907 / DSM 11121 / KW20 / Rd).